The sequence spans 101 residues: Small ribosomal subunit protein uS14 (101 aa).

The protein belongs to the universal ribosomal protein uS14 family. As to quaternary structure, part of the 30S ribosomal subunit. Contacts proteins S3 and S10.

Functionally, binds 16S rRNA, required for the assembly of 30S particles and may also be responsible for determining the conformation of the 16S rRNA at the A site. This chain is Small ribosomal subunit protein uS14, found in Blochmanniella pennsylvanica (strain BPEN).